The chain runs to 321 residues: tRNA dimethylallyltransferase (321 aa).

24-31 lines the ATP pocket; that stretch reads GPTASGKS. 26 to 31 serves as a coordination point for substrate; the sequence is TASGKS. Interaction with substrate tRNA stretches follow at residues 49–52 and 172–176; these read DSMQ and QRIVR.

Belongs to the IPP transferase family. In terms of assembly, monomer. The cofactor is Mg(2+).

The enzyme catalyses adenosine(37) in tRNA + dimethylallyl diphosphate = N(6)-dimethylallyladenosine(37) in tRNA + diphosphate. Its function is as follows. Catalyzes the transfer of a dimethylallyl group onto the adenine at position 37 in tRNAs that read codons beginning with uridine, leading to the formation of N6-(dimethylallyl)adenosine (i(6)A). In Mesorhizobium japonicum (strain LMG 29417 / CECT 9101 / MAFF 303099) (Mesorhizobium loti (strain MAFF 303099)), this protein is tRNA dimethylallyltransferase.